Here is a 412-residue protein sequence, read N- to C-terminus: Transforming growth factor beta-3 proprotein (412 aa).

The first 23 residues, 1–23 (MKMHLQRALVVLALLNLATVSLS), serve as a signal peptide directing secretion. 3 N-linked (GlcNAc...) asparagine glycosylation sites follow: Asn74, Asn135, and Asn142. The short motif at 261–263 (RGD) is the Cell attachment site element. At Gln293 the chain carries N5-methylglutamine. 4 cysteine pairs are disulfide-bonded: Cys307–Cys316, Cys315–Cys378, Cys344–Cys409, and Cys348–Cys411.

It belongs to the TGF-beta family. Interacts with ASPN. Latency-associated peptide: Homodimer; disulfide-linked. Latency-associated peptide: Interacts with Transforming growth factor beta-3 (TGF-beta-3) chain; interaction is non-covalent and maintains (TGF-beta-3) in a latent state. Latency-associated peptide: Interacts with LRRC32/GARP; leading to regulate activation of TGF-beta-3 and promote epithelial fusion during palate development. Latency-associated peptide: Interacts (via cell attachment site) with integrins, leading to release of the active TGF-beta-3. Transforming growth factor beta-3: Homodimer; disulfide-linked. Transforming growth factor beta-3: Interacts with TGF-beta receptors (TGFBR1 and TGFBR2), leading to signal transduction. Transforming growth factor beta-3 proprotein: The precursor proprotein is cleaved in the Golgi apparatus to form Transforming growth factor beta-3 (TGF-beta-3) and Latency-associated peptide (LAP) chains, which remain non-covalently linked, rendering TGF-beta-3 inactive. In terms of processing, methylated at Gln-293 by N6AMT1. As to expression, expressed in cardiomyocytes.

The protein localises to the secreted. It is found in the extracellular space. The protein resides in the extracellular matrix. Its function is as follows. Transforming growth factor beta-3 proprotein: Precursor of the Latency-associated peptide (LAP) and Transforming growth factor beta-3 (TGF-beta-3) chains, which constitute the regulatory and active subunit of TGF-beta-3, respectively. Functionally, required to maintain the Transforming growth factor beta-3 (TGF-beta-3) chain in a latent state during storage in extracellular matrix. Associates non-covalently with TGF-beta-3 and regulates its activation via interaction with 'milieu molecules', such as LTBP1 and LRRC32/GARP, that control activation of TGF-beta-3. Interaction with integrins results in distortion of the Latency-associated peptide chain and subsequent release of the active TGF-beta-3. Transforming growth factor beta-3: Multifunctional protein that regulates embryogenesis and cell differentiation and is required in various processes such as secondary palate development. Activation into mature form follows different steps: following cleavage of the proprotein in the Golgi apparatus, Latency-associated peptide (LAP) and Transforming growth factor beta-3 (TGF-beta-3) chains remain non-covalently linked rendering TGF-beta-3 inactive during storage in extracellular matrix. At the same time, LAP chain interacts with 'milieu molecules', such as LTBP1 and LRRC32/GARP that control activation of TGF-beta-3 and maintain it in a latent state during storage in extracellular milieus. TGF-beta-3 is released from LAP by integrins: integrin-binding results in distortion of the LAP chain and subsequent release of the active TGF-beta-3. Once activated following release of LAP, TGF-beta-3 acts by binding to TGF-beta receptors (TGFBR1 and TGFBR2), which transduce signal. The sequence is that of Transforming growth factor beta-3 proprotein (Tgfb3) from Rattus norvegicus (Rat).